Here is an 84-residue protein sequence, read N- to C-terminus: Putative membrane protein insertion efficiency factor (84 aa).

A disordered region spans residues 61–84; the sequence is SQGFEDPLPPNTKRTNLTHGRQTK. Over residues 72–84 the composition is skewed to polar residues; that stretch reads TKRTNLTHGRQTK.

The protein belongs to the UPF0161 family.

The protein localises to the cell inner membrane. In terms of biological role, could be involved in insertion of integral membrane proteins into the membrane. The sequence is that of Putative membrane protein insertion efficiency factor from Leptospira borgpetersenii serovar Hardjo-bovis (strain JB197).